Reading from the N-terminus, the 145-residue chain is Ribonuclease H (145 aa).

Positions 1–142 (MKEVVIYTDG…CDEIARSMIK (142 aa)) constitute an RNase H type-1 domain. Mg(2+) contacts are provided by aspartate 9, glutamate 47, aspartate 69, and aspartate 134.

This sequence belongs to the RNase H family. In terms of assembly, monomer. It depends on Mg(2+) as a cofactor.

The protein localises to the cytoplasm. It catalyses the reaction Endonucleolytic cleavage to 5'-phosphomonoester.. Functionally, endonuclease that specifically degrades the RNA of RNA-DNA hybrids. In Caldicellulosiruptor saccharolyticus (strain ATCC 43494 / DSM 8903 / Tp8T 6331), this protein is Ribonuclease H.